We begin with the raw amino-acid sequence, 327 residues long: Zinc transport protein ZntB (327 aa).

The Cytoplasmic segment spans residues methionine 1–serine 271. A helical membrane pass occupies residues leucine 272–glycine 292. The Periplasmic segment spans residues glycine 293–tyrosine 300. Residues leucine 301–leucine 321 form a helical membrane-spanning segment. Residues lysine 322 to leucine 327 are Cytoplasmic-facing.

The protein belongs to the CorA metal ion transporter (MIT) (TC 1.A.35) family.

The protein localises to the cell inner membrane. It carries out the reaction Zn(2+)(out) + H(+)(out) = Zn(2+)(in) + H(+)(in). Zinc transporter. Acts as a Zn(2+):proton symporter, which likely mediates zinc ion uptake. This is Zinc transport protein ZntB from Photorhabdus laumondii subsp. laumondii (strain DSM 15139 / CIP 105565 / TT01) (Photorhabdus luminescens subsp. laumondii).